Reading from the N-terminus, the 461-residue chain is Putative aldehyde dehydrogenase FUS7 (461 aa).

Residue 220 to 225 (GSTATG) participates in NAD(+) binding. Catalysis depends on residues glutamate 242 and cysteine 276.

Belongs to the aldehyde dehydrogenase family.

It carries out the reaction an aldehyde + NAD(+) + H2O = a carboxylate + NADH + 2 H(+). In terms of biological role, putative aldehyde dehydrogenase; part of the gene cluster that mediates the biosynthesis of the mycotoxin fusarin C. Within the cluster, FUS1, FUS2, FUS8 and FUS9 are sufficient for fusarin production. The other FUS cluster members are not essential for fusarin C biosynthesis. This Gibberella moniliformis (strain M3125 / FGSC 7600) (Maize ear and stalk rot fungus) protein is Putative aldehyde dehydrogenase FUS7.